The primary structure comprises 372 residues: M protein, serotype 2.2 (372 aa).

The signal sequence occupies residues 1–41 (MARQQTKKNYSLRKLKTGTASVAVALTVLGAGFANQTEVRA). C repeat units lie at residues 124 to 158 (AKTT…EAKH), 166 to 200 (KKLT…EAKY), and 215 to 249 (QKLE…TSEL). Composition is skewed to basic and acidic residues over residues 125–169 (KTTK…KKLT), 226–246 (TSRK…KKVT), and 260–274 (EESK…AELQ). Disordered regions lie at residues 125–191 (KTTK…ASRA) and 211–274 (EAKH…AELQ). 4 D repeats span residues 275-280 (AKLDAQ), 281-286 (GKALKE), 289-294 (AKQTEE), and 296-301 (AKLRAE). A compositionally biased stretch (basic and acidic residues) spans 295–304 (LAKLRAEKAA). The tract at residues 295 to 344 (LAKLRAEKAAGSKTPATKPANKERSGRAAQTATRPSQNKGMRSQLPSTGE) is disordered. Residues 322–341 (AAQTATRPSQNKGMRSQLPS) are compositionally biased toward polar residues. The LPXTG sorting signal motif lies at 339-343 (LPSTG). A Pentaglycyl murein peptidoglycan amidated threonine modification is found at threonine 342. Residues 343–372 (GEAANPFFTAAAATVMVSAGMLALKRKEEN) constitute a propeptide, removed by sortase.

Belongs to the M protein family.

It localises to the secreted. The protein resides in the cell wall. This protein is one of the different antigenic serotypes of protein M. Protein M is closely associated with virulence of the bacterium and can render the organism resistant to phagocytosis. In Streptococcus pyogenes, this protein is M protein, serotype 2.2 (emmL2.2).